The primary structure comprises 395 residues: 1-deoxy-D-xylulose 5-phosphate reductoisomerase (395 aa).

6 residues coordinate NADPH: Thr10, Gly11, Ser12, Ile13, Asn38, and Asn123. 1-deoxy-D-xylulose 5-phosphate is bound at residue Lys124. Residue Glu125 participates in NADPH binding. Asp149 is a Mn(2+) binding site. Positions 150, 151, 185, and 208 each coordinate 1-deoxy-D-xylulose 5-phosphate. Glu151 is a Mn(2+) binding site. Gly214 serves as a coordination point for NADPH. Residues Ser221, Asn226, Lys227, and Glu230 each coordinate 1-deoxy-D-xylulose 5-phosphate. Glu230 lines the Mn(2+) pocket.

It belongs to the DXR family. The cofactor is Mg(2+). Mn(2+) is required as a cofactor.

It catalyses the reaction 2-C-methyl-D-erythritol 4-phosphate + NADP(+) = 1-deoxy-D-xylulose 5-phosphate + NADPH + H(+). The protein operates within isoprenoid biosynthesis; isopentenyl diphosphate biosynthesis via DXP pathway; isopentenyl diphosphate from 1-deoxy-D-xylulose 5-phosphate: step 1/6. Catalyzes the NADPH-dependent rearrangement and reduction of 1-deoxy-D-xylulose-5-phosphate (DXP) to 2-C-methyl-D-erythritol 4-phosphate (MEP). In Shewanella woodyi (strain ATCC 51908 / MS32), this protein is 1-deoxy-D-xylulose 5-phosphate reductoisomerase.